The sequence spans 543 residues: Efflux pump mokI (543 aa).

Transmembrane regions (helical) follow at residues 30-50 (LVVT…SIIV), 90-110 (LLTL…GSAL), 125-145 (AVAG…LASA), 153-173 (LLIG…PLLG), 185-205 (CFYI…AIHI), 233-253 (LLGF…LEWG), 261-281 (SSVI…FGFW), 307-327 (LFLG…PIYF), 340-360 (VYML…GAII), 364-384 (GYYI…AGLV), 394-416 (AAWV…TPII), 428-448 (ALGI…FLTL), and 509-529 (VGAS…GLIW).

Belongs to the major facilitator superfamily. TCR/Tet family.

It is found in the membrane. Efflux pump; part of the gene cluster that mediates the biosynthesis of monakolin K, also known as lovastatin, and which acts as a potent competitive inhibitor of HMG-CoA reductase. In Monascus pilosus (Red mold), this protein is Efflux pump mokI.